Here is a 256-residue protein sequence, read N- to C-terminus: CD209 antigen-like protein 2 (256 aa).

The Cytoplasmic segment spans residues 1 to 50 (MSDSKEPRAQPLGLLEEEELITSSMNFFPRDFGFRQTRGYKSLAGCLGHA). The Endocytosis signal signature appears at 14 to 15 (LL). Residues 51–71 (PLVLPLLFFTLFTGLLVAILV) traverse the membrane as a helical; Signal-anchor for type II membrane protein segment. The Extracellular segment spans residues 72–240 (QVSKNPSSQR…KSAASCSRDE (169 aa)). 3 disulfides stabilise this stretch: cysteine 108–cysteine 119, cysteine 136–cysteine 229, and cysteine 208–cysteine 221. The 117-residue stretch at 114–230 (FFQGNCYFIS…CSAAKFWICK (117 aa)) folds into the C-type lectin domain. The Ca(2+) site is built by glutamate 199, asparagine 201, isoleucine 203, glutamate 206, asparagine 217, and aspartate 218.

As to expression, predominantly expressed in liver and axillary lymph nodes. At very low levels also found in other tissues.

The protein resides in the membrane. Probable pathogen-recognition receptor involved in peripheral immune surveillance in liver. May mediate the endocytosis of pathogens which are subsequently degraded in lysosomal compartments. Probably recognizes in a calcium-dependent manner high mannose N-linked oligosaccharides in a variety of pathogen antigens. Is a receptor for ICAM3, probably by binding to mannose-like carbohydrates. The chain is CD209 antigen-like protein 2 (CD209L2) from Macaca mulatta (Rhesus macaque).